Here is a 364-residue protein sequence, read N- to C-terminus: Chorismate synthase (364 aa).

The disordered stretch occupies residues 41-60 (MQHDLDRRRPGTSRYTTARR). NADP(+) is bound by residues arginine 48 and arginine 54. FMN is bound by residues 125–127 (RSS), 238–239 (NA), glycine 278, 293–297 (KPTSS), and arginine 319.

This sequence belongs to the chorismate synthase family. In terms of assembly, homotetramer. FMNH2 is required as a cofactor.

It carries out the reaction 5-O-(1-carboxyvinyl)-3-phosphoshikimate = chorismate + phosphate. It participates in metabolic intermediate biosynthesis; chorismate biosynthesis; chorismate from D-erythrose 4-phosphate and phosphoenolpyruvate: step 7/7. Its function is as follows. Catalyzes the anti-1,4-elimination of the C-3 phosphate and the C-6 proR hydrogen from 5-enolpyruvylshikimate-3-phosphate (EPSP) to yield chorismate, which is the branch point compound that serves as the starting substrate for the three terminal pathways of aromatic amino acid biosynthesis. This reaction introduces a second double bond into the aromatic ring system. This is Chorismate synthase from Shewanella baltica (strain OS185).